The sequence spans 387 residues: Oxidase FUB9 (387 aa).

Residues 1 to 20 (MSRTNLPIQPAKMSDATSSK) form a disordered region. An FMN hydroxy acid dehydrogenase domain is found at 18 to 379 (SSKPQIFSIQ…TPAHLSLLNA (362 aa)). Y44 serves as a coordination point for a 2-oxocarboxylate. S126, Q150, and T178 together coordinate FMN. R187 is an a 2-oxocarboxylate binding site. Position 250 (K250) interacts with FMN. H274 functions as the Proton acceptor in the catalytic mechanism. An a 2-oxocarboxylate-binding site is contributed by R277. FMN is bound by residues 305-309 (DGGFR) and 328-329 (GR).

Belongs to the FMN-dependent alpha-hydroxy acid dehydrogenase family. FMN serves as cofactor.

It participates in mycotoxin biosynthesis. In terms of biological role, oxidase; part of the gene cluster that mediates the biosynthesis of fusaric acid, a mycotoxin with low to moderate toxicity to animals and humans, but with high phytotoxic properties. L-aspartate is suggested as fusaric acid amino acid precursor that is activated and further processed to O-acetyl-L-homoserine by cluster enzymes aspartate kinase FUB3 and homoserine O-acetyltransferase FUB5, as well as enzymes of the primary metabolism. The polyketide synthase (PKS) FUB1 generates the triketide trans-2-hexenal which is presumptively released by the hydrolase FUB4 and linked to the NRPS-bound amino acid precursor by NAD(P)-dependent dehydrogenase FUB6. FUB1, FUB4, and the non-canonical NRPS Fub8 may form an enzyme complex. Further processing of the NRPS-bound intermediate might be carried out by FUB6 and the sulfhydrylase FUB7, enabling a spontaneous electrocyclization to close the carbon backbone of fusaric acid. Dihydrofusaric acid is likely to be released via reduction by the thioester reductase (TR) domain of FUB8 whereupon the final oxidation to fusaric acid may (also) be performed by the FMN-dependent dehydrogenase FUB9. In Gibberella moniliformis (strain M3125 / FGSC 7600) (Maize ear and stalk rot fungus), this protein is Oxidase FUB9.